We begin with the raw amino-acid sequence, 175 residues long: Isopentenyl-diphosphate Delta-isomerase (175 aa).

2 residues coordinate Mn(2+): His-22 and His-29. Residues 27 to 160 (KLHRAFSVLL…PAAYTPWLAE (134 aa)) enclose the Nudix hydrolase domain. Residue Cys-64 is part of the active site. A Mg(2+)-binding site is contributed by Cys-64. His-66 is a Mn(2+) binding site. A Mg(2+)-binding site is contributed by Glu-84. Glu-110 and Glu-112 together coordinate Mn(2+). Glu-112 is an active-site residue.

This sequence belongs to the IPP isomerase type 1 family. Requires Mg(2+) as cofactor. Mn(2+) is required as a cofactor.

The protein localises to the cytoplasm. The catalysed reaction is isopentenyl diphosphate = dimethylallyl diphosphate. The protein operates within isoprenoid biosynthesis; dimethylallyl diphosphate biosynthesis; dimethylallyl diphosphate from isopentenyl diphosphate: step 1/1. Functionally, catalyzes the 1,3-allylic rearrangement of the homoallylic substrate isopentenyl (IPP) to its highly electrophilic allylic isomer, dimethylallyl diphosphate (DMAPP). The protein is Isopentenyl-diphosphate Delta-isomerase of Nocardia farcinica (strain IFM 10152).